A 393-amino-acid chain; its full sequence is Endoplasmic reticulum junction formation protein lunapark-A (393 aa).

The Cytoplasmic segment spans residues Met-1–Arg-45. A helical transmembrane segment spans residues Leu-46 to Ile-66. Over Pro-67–Arg-69 the chain is Lumenal. Residues Met-70 to Leu-90 traverse the membrane as a helical segment. The Cytoplasmic segment spans residues Arg-91–Glu-393. Positions Ile-95–Lys-130 form a coiled coil. Residues Lys-146–Thr-209 form a disordered region. Residues Thr-176 to Pro-190 show a composition bias toward pro residues. Residues Cys-269–Cys-294 form a C4-type; plays a role in ER morphology zinc finger. A disordered region spans residues Ala-314 to Glu-393. Composition is skewed to basic and acidic residues over residues Glu-340–Asp-353 and Glu-364–Gly-383.

Belongs to the lunapark family. Homodimer; homodimerization requires the C4-type zinc finger motif and decreases during mitosis in a phosphorylation-dependent manner. Phosphorylated. Phosphorylation occurs during interphase. Phosphorylation also occurs during mitosis; these phosphorylations reduce both its homodimerization and the ER three-way tubular junction formation.

It localises to the endoplasmic reticulum membrane. Endoplasmic reticulum (ER)-shaping membrane protein that plays a role in determining ER morphology. Involved in the stabilization of nascent three-way ER tubular junctions within the ER network. May also play a role as a curvature-stabilizing protein within three-way ER tubular junction network. This chain is Endoplasmic reticulum junction formation protein lunapark-A (lnpka), found in Danio rerio (Zebrafish).